The sequence spans 422 residues: 5-hydroxytryptamine receptor 1A (422 aa).

Residues 1 to 23 (MDVLSPGQGNNTTSPPAPFETGG) form a disordered region. At 1 to 38 (MDVLSPGQGNNTTSPPAPFETGGNTTGISDVTFSYQVI) the chain is on the extracellular side. Residues N10, N11, and N24 are each glycosylated (N-linked (GlcNAc...) asparagine). The chain crosses the membrane as a helical span at residues 39 to 59 (TSLLLGTLIFCAVLGNACVVA). Topologically, residues 60 to 73 (AIALERSLQNVANY) are cytoplasmic. The helical transmembrane segment at 74–98 (LIGSLAVTDLMVSVLVLPMAALYQV) threads the bilayer. Topologically, residues 99 to 107 (LNKWTLGQV) are extracellular. The helical transmembrane segment at 108 to 132 (TCDLFIALDVLCCTSSILHLCAIAL) threads the bilayer. A disulfide bridge links C109 with C187. Residues D116 and C120 each contribute to the serotonin site. A DRY motif; important for ligand-induced conformation changes motif is present at residues 133 to 135 (DRY). Residues 133–152 (DRYWAITDPIDYVNKRTPRR) are Cytoplasmic-facing. The chain crosses the membrane as a helical span at residues 153–174 (AAALISLTWLIGFLISIPPMLG). The Extracellular segment spans residues 175–193 (WRTPEDRSDPDACTISKDH). Residues 194–216 (GYTIYSTFGAFYIPLLLMLVLYG) form a helical membrane-spanning segment. Topologically, residues 217 to 346 (RIFRAARFRI…LARERKTVKT (130 aa)) are cytoplasmic. Positions 235 to 262 (KTGADTRHGASPAPQPKKSVNGESGSRN) are disordered. 4 residues coordinate 1D-myo-inositol 4-phosphate: T314, K345, T346, and G352. Residues 347–370 (LGIIMGTFILCWLPFFIVALVLPF) traverse the membrane as a helical segment. The Extracellular portion of the chain corresponds to 371–378 (CESSCHMP). Residues 379-403 (TLLGAIINWLGYSNSLLNPVIYAYF) traverse the membrane as a helical segment. The NPxxY motif; important for ligand-induced conformation changes and signaling motif lies at 396–400 (NPVIY). Residues F403, N404, and K405 each coordinate 1D-myo-inositol 4-phosphate. Topologically, residues 404 to 422 (NKDFQNAFKKIIKCKFCRQ) are cytoplasmic.

Belongs to the G-protein coupled receptor 1 family. 5-hydroxytryptamine receptor subfamily. HTR1A sub-subfamily. Heterodimer; heterodimerizes with GPER1. Interacts with YIF1B. Interacts with GPR39 and GALR1.

The protein resides in the cell membrane. Its subcellular location is the cell projection. The protein localises to the dendrite. Its activity is regulated as follows. G-protein coupled receptor activity is regulated by lipids: phosphatidylinositol 4-phosphate increases HTR1A-mediated activity. Functionally, G-protein coupled receptor for 5-hydroxytryptamine (serotonin). Also functions as a receptor for various drugs and psychoactive substances. Ligand binding causes a conformation change that triggers signaling via guanine nucleotide-binding proteins (G proteins) and modulates the activity of downstream effectors, such as adenylate cyclase. HTR1A is coupled to G(i)/G(o) G alpha proteins and mediates inhibitory neurotransmission: signaling inhibits adenylate cyclase activity and activates a phosphatidylinositol-calcium second messenger system that regulates the release of Ca(2+) ions from intracellular stores. Beta-arrestin family members regulate signaling by mediating both receptor desensitization and resensitization processes. This chain is 5-hydroxytryptamine receptor 1A (HTR1A), found in Gorilla gorilla gorilla (Western lowland gorilla).